Reading from the N-terminus, the 372-residue chain is NAD(P)H-quinone oxidoreductase subunit 1 (372 aa).

8 helical membrane-spanning segments follow: residues I27–V47, I97–V117, V128–M148, L176–V196, I204–L224, I266–V286, S308–L328, and F347–P367.

Belongs to the complex I subunit 1 family. NDH-1 is composed of at least 11 different subunits.

The protein resides in the cellular thylakoid membrane. It carries out the reaction a plastoquinone + NADH + (n+1) H(+)(in) = a plastoquinol + NAD(+) + n H(+)(out). The catalysed reaction is a plastoquinone + NADPH + (n+1) H(+)(in) = a plastoquinol + NADP(+) + n H(+)(out). Its function is as follows. NDH-1 shuttles electrons from an unknown electron donor, via FMN and iron-sulfur (Fe-S) centers, to quinones in the respiratory and/or the photosynthetic chain. The immediate electron acceptor for the enzyme in this species is believed to be plastoquinone. Couples the redox reaction to proton translocation, and thus conserves the redox energy in a proton gradient. This Prochlorococcus marinus (strain MIT 9515) protein is NAD(P)H-quinone oxidoreductase subunit 1.